A 588-amino-acid chain; its full sequence is Adenylate kinase 5, chloroplastic (588 aa).

Residues 1-34 are disordered; it reads MASLSLSSAHFSSTSSSSRSSISTSSLSPSSTSL. The N-terminal 73 residues, 1–73, are a transit peptide targeting the chloroplast; it reads MASLSLSSAH…SFSTSNSQIR (73 aa). 89-94 is a binding site for ATP; the sequence is ASGKGT. An NMP region spans residues 109 to 138; that stretch reads STGDLLRAEVSSGTDIGKRAKEFMNSGSLV. AMP is bound by residues Arg-115, 136-138, 165-168, and Gln-172; these read SLV and GFPR. The segment at 202-235 is LID; it reads GRRLDPVTGKIYHIKNYPPESDEIKARLVTRPDD. Arg-203 contributes to the ATP binding site. The AMP site is built by Arg-232 and Arg-243.

It belongs to the adenylate kinase family. In terms of assembly, monomer.

It is found in the plastid. The protein localises to the chloroplast. The enzyme catalyses AMP + ATP = 2 ADP. Catalyzes the reversible transfer of the terminal phosphate group between ATP and AMP. The sequence is that of Adenylate kinase 5, chloroplastic from Arabidopsis thaliana (Mouse-ear cress).